A 129-amino-acid chain; its full sequence is Small ribosomal subunit protein uS11 (129 aa).

It belongs to the universal ribosomal protein uS11 family. As to quaternary structure, part of the 30S ribosomal subunit. Interacts with proteins S7 and S18. Binds to IF-3.

In terms of biological role, located on the platform of the 30S subunit, it bridges several disparate RNA helices of the 16S rRNA. Forms part of the Shine-Dalgarno cleft in the 70S ribosome. This is Small ribosomal subunit protein uS11 from Colwellia psychrerythraea (strain 34H / ATCC BAA-681) (Vibrio psychroerythus).